Consider the following 472-residue polypeptide: NADH-quinone oxidoreductase subunit N (472 aa).

The next 14 membrane-spanning stretches (helical) occupy residues 11-31 (AELS…FLPA), 43-63 (ILLT…LFGG), 67-87 (STPM…LVFL), 103-123 (GEFY…VSAG), 125-145 (FLLF…LVAF), 159-179 (FILS…MIYG), 200-220 (VLAL…VPFH), 234-254 (VSAY…MIIL), 265-285 (WSEI…LFAI), 293-313 (FMAF…LAGT), 318-338 (ASLV…FGVI), 362-384 (PKLT…FAGF), 401-421 (LIVF…LLIV), and 446-466 (LLVC…YQLL).

Belongs to the complex I subunit 2 family. As to quaternary structure, NDH-1 is composed of 14 different subunits. Subunits NuoA, H, J, K, L, M, N constitute the membrane sector of the complex.

Its subcellular location is the cell inner membrane. It catalyses the reaction a quinone + NADH + 5 H(+)(in) = a quinol + NAD(+) + 4 H(+)(out). Functionally, NDH-1 shuttles electrons from NADH, via FMN and iron-sulfur (Fe-S) centers, to quinones in the respiratory chain. The immediate electron acceptor for the enzyme in this species is believed to be a menaquinone. Couples the redox reaction to proton translocation (for every two electrons transferred, four hydrogen ions are translocated across the cytoplasmic membrane), and thus conserves the redox energy in a proton gradient. This is NADH-quinone oxidoreductase subunit N from Phocaeicola vulgatus (strain ATCC 8482 / DSM 1447 / JCM 5826 / CCUG 4940 / NBRC 14291 / NCTC 11154) (Bacteroides vulgatus).